The sequence spans 130 residues: Small ribosomal subunit protein uS8 (130 aa).

The protein belongs to the universal ribosomal protein uS8 family. As to quaternary structure, part of the 30S ribosomal subunit. Contacts proteins S5 and S12.

One of the primary rRNA binding proteins, it binds directly to 16S rRNA central domain where it helps coordinate assembly of the platform of the 30S subunit. The protein is Small ribosomal subunit protein uS8 of Marinobacter nauticus (strain ATCC 700491 / DSM 11845 / VT8) (Marinobacter aquaeolei).